A 149-amino-acid polypeptide reads, in one-letter code: Large ribosomal subunit protein uL13 (149 aa).

The protein belongs to the universal ribosomal protein uL13 family. In terms of assembly, part of the 50S ribosomal subunit.

Functionally, this protein is one of the early assembly proteins of the 50S ribosomal subunit, although it is not seen to bind rRNA by itself. It is important during the early stages of 50S assembly. This is Large ribosomal subunit protein uL13 from Prosthecochloris aestuarii (strain DSM 271 / SK 413).